Reading from the N-terminus, the 469-residue chain is Sorting and assembly machinery component 50 homolog (469 aa).

The disordered stretch occupies residues 1–20 (MGTVHARSLEPLPSSGPDFG). In terms of domain architecture, POTRA spans 45-125 (VVVQHVHFDG…LDVTFEVTEL (81 aa)). The residue at position 255 (Lys255) is an N6-methyllysine.

It belongs to the SAM50/omp85 family. In terms of assembly, associates with the mitochondrial contact site and cristae organizing system (MICOS) complex, composed of at least MICOS10/MIC10, CHCHD3/MIC19, CHCHD6/MIC25, APOOL/MIC27, IMMT/MIC60, APOO/MIC23/MIC26 and QIL1/MIC13. This complex was also known under the names MINOS or MitOS complex. The MICOS complex associates with mitochondrial outer membrane proteins SAMM50, MTX1 and MTX2 (together described as components of the mitochondrial outer membrane sorting assembly machinery (SAM) complex) and DNAJC11, mitochondrial inner membrane protein TMEM11 and with HSPA9. The MICOS and SAM complexes together with DNAJC11 are part of a large protein complex spanning both membranes termed the mitochondrial intermembrane space bridging (MIB) complex. Interacts with CHCHD3/MIC19. Interacts with ARMC1. (Microbial infection) Interacts with parasite T.gondii RH strain MAF1b1; the interaction is probably indirect and results in the disruption of the MIB complex and the formation of SPOTs (structures positive for outer mitochondrial membrane (OMM)), a cellular response to OMM stress, which leads to the constitutive shedding of OMM vesicles.

Its subcellular location is the mitochondrion outer membrane. It localises to the cytoplasm. The protein localises to the mitochondrion. Plays a crucial role in the maintenance of the structure of mitochondrial cristae and the proper assembly of the mitochondrial respiratory chain complexes. Required for the assembly of TOMM40 into the TOM complex. The sequence is that of Sorting and assembly machinery component 50 homolog (SAMM50) from Homo sapiens (Human).